The sequence spans 127 residues: Ribonuclease P protein component 1 (127 aa).

Belongs to the eukaryotic/archaeal RNase P protein component 1 family. Consists of a catalytic RNA component and at least 4-5 protein subunits.

It is found in the cytoplasm. It catalyses the reaction Endonucleolytic cleavage of RNA, removing 5'-extranucleotides from tRNA precursor.. Its function is as follows. Part of ribonuclease P, a protein complex that generates mature tRNA molecules by cleaving their 5'-ends. This Pyrococcus abyssi (strain GE5 / Orsay) protein is Ribonuclease P protein component 1.